The sequence spans 243 residues: Pyridoxine 5'-phosphate synthase (243 aa).

Residue asparagine 9 participates in 3-amino-2-oxopropyl phosphate binding. 11–12 (DH) contributes to the 1-deoxy-D-xylulose 5-phosphate binding site. A 3-amino-2-oxopropyl phosphate-binding site is contributed by arginine 20. The Proton acceptor role is filled by histidine 45. 2 residues coordinate 1-deoxy-D-xylulose 5-phosphate: arginine 47 and histidine 52. Glutamate 72 acts as the Proton acceptor in catalysis. Position 102 (threonine 102) interacts with 1-deoxy-D-xylulose 5-phosphate. Histidine 193 serves as the catalytic Proton donor. 3-amino-2-oxopropyl phosphate is bound by residues glycine 194 and 215-216 (GH).

This sequence belongs to the PNP synthase family. In terms of assembly, homooctamer; tetramer of dimers.

The protein localises to the cytoplasm. The catalysed reaction is 3-amino-2-oxopropyl phosphate + 1-deoxy-D-xylulose 5-phosphate = pyridoxine 5'-phosphate + phosphate + 2 H2O + H(+). It functions in the pathway cofactor biosynthesis; pyridoxine 5'-phosphate biosynthesis; pyridoxine 5'-phosphate from D-erythrose 4-phosphate: step 5/5. Functionally, catalyzes the complicated ring closure reaction between the two acyclic compounds 1-deoxy-D-xylulose-5-phosphate (DXP) and 3-amino-2-oxopropyl phosphate (1-amino-acetone-3-phosphate or AAP) to form pyridoxine 5'-phosphate (PNP) and inorganic phosphate. The sequence is that of Pyridoxine 5'-phosphate synthase from Vibrio parahaemolyticus serotype O3:K6 (strain RIMD 2210633).